The chain runs to 366 residues: Neuropeptide Y receptor type 1 (366 aa).

Topologically, residues 1-39 (MNFSTYFENLSVPNNISGNITFPISEDCALPLPMIFTLA) are extracellular. 3 N-linked (GlcNAc...) asparagine glycosylation sites follow: Asn2, Asn9, and Asn15. A helical membrane pass occupies residues 40–60 (LAYGAVIILGLSGNLALIIII). Topologically, residues 61–82 (LKQKEMRNVTNILIVNLSFSDL) are cytoplasmic. The helical transmembrane segment at 83–103 (LATIMCLPFTLIYTLMDHWIF) threads the bilayer. The Extracellular portion of the chain corresponds to 104–111 (GEVMCKLN). A disulfide bridge connects residues Cys108 and Cys193. The helical transmembrane segment at 112–132 (EYIQCVSVTVSIFSLVLIAIE) threads the bilayer. Residues 133–149 (RHQLIINPRGWRPNNRH) lie on the Cytoplasmic side of the membrane. Residues 150–170 (ACFGITVIWGFAMACSTPLMM) form a helical membrane-spanning segment. Topologically, residues 171 to 203 (YSVLTDEPFKNISLDSYIGKYVCLEDFPEDKFR) are extracellular. A glycan (N-linked (GlcNAc...) asparagine) is linked at Asn181. A helical transmembrane segment spans residues 204-224 (LSYTTLLFILQYLGPLCFIFV). Over 225–260 (CYTKIFLRLKRRNNMMDKIRDNKYRSSETKRINIML) the chain is Cytoplasmic. A helical membrane pass occupies residues 261-281 (LSIVVGFALCWLPFFIFNLVF). The Extracellular portion of the chain corresponds to 282–294 (DWNHEAVATCNHN). The chain crosses the membrane as a helical span at residues 295–315 (LLFLICHLTAMISTCVNPIFY). Residues 316–366 (GFLNKNFQRDLQFFFNFCDFRSREDDYETIAMSTMHTDVSKTSLKQASPIA) lie on the Cytoplasmic side of the membrane. Cys333 carries S-palmitoyl cysteine lipidation.

Belongs to the G-protein coupled receptor 1 family.

It is found in the cell membrane. Functionally, receptor for neuropeptide Y and peptide YY. In Xenopus laevis (African clawed frog), this protein is Neuropeptide Y receptor type 1 (npy1r).